Reading from the N-terminus, the 202-residue chain is IMP cyclohydrolase (202 aa).

The protein belongs to the archaeal IMP cyclohydrolase family.

It carries out the reaction IMP + H2O = 5-formamido-1-(5-phospho-D-ribosyl)imidazole-4-carboxamide. It participates in purine metabolism; IMP biosynthesis via de novo pathway; IMP from 5-formamido-1-(5-phospho-D-ribosyl)imidazole-4-carboxamide: step 1/1. Catalyzes the cyclization of 5-formylamidoimidazole-4-carboxamide ribonucleotide to IMP. The chain is IMP cyclohydrolase (purO) from Methanocaldococcus jannaschii (strain ATCC 43067 / DSM 2661 / JAL-1 / JCM 10045 / NBRC 100440) (Methanococcus jannaschii).